A 661-amino-acid chain; its full sequence is 7-beta-hydroxy-3-oxochol-24-oyl-CoA 4-desaturase (661 aa).

Gln-104 is a binding site for FMN. Residue 168 to 171 (HCAH) participates in substrate binding. Catalysis depends on Tyr-173, which acts as the Proton donor. Residues Arg-222, Lys-298, and 320–321 (GR) contribute to the FMN site. Positions 344, 347, 351, and 363 each coordinate [4Fe-4S] cluster. FAD-binding residues include Gly-394, Glu-413, Gln-421, Lys-431, and Ala-458.

The protein in the N-terminal section; belongs to the NADH:flavin oxidoreductase/NADH oxidase family. In terms of assembly, homotrimer. It depends on FMN as a cofactor. The cofactor is FAD. [4Fe-4S] cluster is required as a cofactor.

The catalysed reaction is 7beta-hydroxy-3-oxochol-24-oyl-CoA + NAD(+) = 7beta-hydroxy-3-oxochol-4-en-24-oyl-CoA + NADH + H(+). It functions in the pathway lipid metabolism; bile acid degradation. Activity is inhibited by sulfhydryl-reactive compounds, acriflavine, o-phenanthroline and EDTA. Functionally, NADH-dependent flavin oxidoreductase. Stereo-specific NAD(H)-dependent 3-oxo-delta4-cholenoic acid oxidoreductase involved in bile acid 7beta-dehydroxylation. In Clostridium scindens (strain JCM 10418 / VPI 12708), this protein is 7-beta-hydroxy-3-oxochol-24-oyl-CoA 4-desaturase.